The primary structure comprises 368 residues: UPF0284 protein SYNPCC7002_A1742 (368 aa).

It belongs to the UPF0284 family.

This chain is UPF0284 protein SYNPCC7002_A1742, found in Picosynechococcus sp. (strain ATCC 27264 / PCC 7002 / PR-6) (Agmenellum quadruplicatum).